A 648-amino-acid chain; its full sequence is RAF proto-oncogene serine/threonine-protein kinase (648 aa).

The residue at position 29 (Ser-29) is a Phosphoserine; by MAPK1. Ser-43 carries the post-translational modification Phosphoserine; by PKA and MAPK1. The 76-residue stretch at 56 to 131 folds into the RBD domain; sequence NTIRVFLPNK…IGEELQVDFL (76 aa). The Phorbol-ester/DAG-type zinc finger occupies 138-184; sequence THNFARKTFLKLAFCDICQKFLLNGFRCQTCGYKFHEHCSTKVPTMC. His-139, Cys-152, Cys-155, Cys-165, Cys-168, His-173, Cys-176, and Cys-184 together coordinate Zn(2+). Residues 220–334 are disordered; the sequence is SVSRMPVSSQ…QEKNKIRPRG (115 aa). Residues 239–271 are compositionally biased toward polar residues; that stretch reads TFNTSSPSSEGSLSQRQRSTSTPNVHMVSTTLP. The residue at position 252 (Ser-252) is a Phosphoserine. The residue at position 259 (Ser-259) is a Phosphoserine; by PKA, PKC and PKB/AKT1. Thr-268 is subject to Phosphothreonine; by autocatalysis. At Thr-269 the chain carries Phosphothreonine; by PKA. Basic and acidic residues predominate over residues 275–285; the sequence is RMIEDAIRSHS. Low complexity predominate over residues 286-301; the sequence is ESASPSALSSSPNNLS. Ser-289 is subject to Phosphoserine; by MAPK1. At Ser-296 the chain carries Phosphoserine. A Phosphoserine; by MAPK1 modification is found at Ser-301. Residues 331-349 are interaction with PEBP1/RKIP; that stretch reads RPRGQRDSSYYWEIEASEV. At Ser-338 the chain carries Phosphoserine; by PAK1, PAK2, PAK3 and PAK5. Position 339 is a phosphoserine; by PAK1, PAK2 and PAK3 (Ser-339). Phosphotyrosine; by SRC is present on residues Tyr-340 and Tyr-341. Residues 349-609 form the Protein kinase domain; the sequence is VMLSTRIGSG…PQILSSIELL (261 aa). Residues 355–363 and Lys-375 each bind ATP; that span reads IGSGSFGTV. The Proton acceptor role is filled by Asp-468. Ser-471 is subject to Phosphoserine. Thr-491 is modified (phosphothreonine). The residue at position 494 (Ser-494) is a Phosphoserine. Position 499 is a phosphoserine; by PKC (Ser-499). Arg-563 carries the symmetric dimethylarginine; by PRMT5 modification. A Phosphoserine modification is found at Ser-621. Ser-642 is modified (phosphoserine; by MAPK1).

It belongs to the protein kinase superfamily. TKL Ser/Thr protein kinase family. RAF subfamily. As to quaternary structure, monomer. Homodimer. Heterodimerizes with BRAF and this heterodimer possesses a highly increased kinase activity compared to the respective homodimers or monomers. Heterodimerization is mitogen-regulated and enhanced by 14-3-3 proteins. MAPK1/ERK2 activation can induce a negative feedback that promotes the dissociation of the heterodimer. Forms a multiprotein complex with Ras (M-Ras/MRAS), SHOC2 and protein phosphatase 1 (PPP1CA, PPP1CB and PPP1CC). Interacts with LZTR1. Interacts with Ras proteins; the interaction is antagonized by RIN1. Weakly interacts with RIT1. Interacts (via N-terminus) with RGS14 (via RBD domains); the interaction mediates the formation of a ternary complex with BRAF, a ternary complex inhibited by GNAI1. Probably forms a complex composed of chaperones HSP90 and HSP70, co-chaperones CDC37, PPP5C, TSC1 and client protein TSC2, CDK4, AKT, RAF1 and NR3C1; this complex does not contain co-chaperones STIP1/HOP and PTGES3/p23. Interacts with STK3/MST2; the interaction inhibits its pro-apoptotic activity. Interacts (when phosphorylated at Ser-259) with YWHAZ (unphosphorylated at 'Thr-232'). Interacts with MAP2K1/MEK1 and MAP2K2/MEK2. Interacts with MAP3K5/ASF1 (via N-terminus) and this interaction inhibits the proapoptotic function of MAP3K5/ASK1. Interacts with PAK1 (via kinase domain). The phosphorylated form interacts with PIN1. The Ser-338 and Ser-339 phosphorylated form (by PAK1) interacts with BCL2. Interacts with PEBP1/RKIP and this interaction is enhanced if RAF1 is phosphorylated on residues Ser-338, Ser-339, Tyr-340 and Tyr-341. Interacts with ADCY2, ADCY5, ADCY6, DGKH, RCAN1/DSCR1, PPP1R12A, PKB/AKT1, PPP2CA, PPP2R1B, SPRY2, SPRY4, CNKSR1/CNK1, KSR2 and PHB/prohibitin. Interacts with ROCK2. In its active form, interacts with PRMT5. Interacts with FAM83B; displaces 14-3-3 proteins from RAF1 and activates RAF1. Interacts with PDE8A; the interaction promotes RAF1 activity. Interacts with MFHAS1. Interacts with GLS. Interacts with NEK10 and MAP2K1; the interaction is direct with NEK10 and required for ERK1/2-signaling pathway activation in response to UV irradiation. It depends on Zn(2+) as a cofactor. Phosphorylation at Thr-269, Ser-338, Tyr-341, Thr-491 and Ser-494 results in its activation. Phosphorylation at Ser-29, Ser-43, Ser-289, Ser-296, Ser-301 and Ser-642 by MAPK1/ERK2 results in its inactivation. Phosphorylation at Ser-259 induces the interaction with YWHAZ and inactivates kinase activity. Dephosphorylation of Ser-259 by the SHOC2-MRAS-PP1c (SMP) complex consisting of SHOC2, GTP-bound M-Ras/MRAS and the catalytic subunit of protein phosphatase 1 (PPP1CA, PPP1CB or PPP1CC); this relieves inactivation and stimulates kinase activity. Phosphorylation at Ser-338 by PAK1 and PAK5 and Ser-339 by PAK1 is required for its mitochondrial localization. Phosphorylation at Ser-621 in response to growth factor treatment stabilizes the protein, possibly by preventing proteasomal degradation. Phosphorylation at Ser-289, Ser-296, Ser-301, Ser-338 and Ser-621 are somehow linked to the methylation potential of cells. Treatment of cells with HGF in the presence of the methylation inhibitor 5'-methylthioadenosine (MTA) results in increased phosphorylation at Ser-338 and Ser-621 and decreased phosphorylation at Ser-296, Ser-301 and Ser-338. Dephosphorylation at Ser-338 by PPP5C results in an activity decrease. In terms of processing, methylated at Arg-563 in response to EGF treatment. This modification leads to destabilization of the protein, possibly through proteasomal degradation. In skeletal muscle, isoform 1 is more abundant than isoform 2.

The protein localises to the cytoplasm. It is found in the cell membrane. It localises to the mitochondrion. Its subcellular location is the nucleus. It catalyses the reaction L-seryl-[protein] + ATP = O-phospho-L-seryl-[protein] + ADP + H(+). It carries out the reaction L-threonyl-[protein] + ATP = O-phospho-L-threonyl-[protein] + ADP + H(+). Its activity is regulated as follows. Regulation is a highly complex process involving membrane recruitment, protein-protein interactions, dimerization, and phosphorylation/dephosphorylation events. Ras-GTP recruits RAF1 to the membrane, thereby promoting its activation. The inactive conformation of RAF1 is maintained by autoinhibitory interactions occurring between the N-terminal regulatory and the C-terminal catalytic domains and by the binding of a 14-3-3 protein that contacts two phosphorylation sites, Ser-259 and Ser-621. Upon mitogenic stimulation, Ras and PPP2R1A cooperate to release autoinhibition and the subsequent phosphorylation of activating sites: Ser-338, Tyr-341, Thr-491, and Ser-494, yields a fully active kinase. Through a negative feedback mechanism involving MAPK1/ERK2, RAF1 is phosphorylated on Ser-29, Ser-43, Ser-289, Ser-296, Ser-301 and Ser-642 by MAPK1/ERK2, which yields an inactive, desensitized kinase. The signaling-competent conformation of RAF1 is finally re-established by the coordinated action of PIN1, a prolyl isomerase that converts pSer and pThr residues from the cis to the trans conformation, which is preferentially recognized and dephosphorylated by PPP2R1A. Activated by homodimerization and heterodimerization (with BRAF). Also regulated through association with other proteins such as KSR2, CNKSR1/CNK1, PEBP1/RKIP, PHB/prohibitin and SPRY4. PEBP1/RKIP acts by dissociating RAF1 from its substrates MAP2K1/MEK1 and MAP2K2/MEK2. PHB/prohibitin facilitates the displacement of 14-3-3 from RAF1 by activated Ras, thereby promoting cell membrane localization and phosphorylation of RAF1 at the activating Ser-338. SPRY4 inhibits Ras-independent, but not Ras-dependent, activation of RAF1. CNKSR1/CNK1 regulates Src-mediated RAF1 activation. In terms of biological role, serine/threonine-protein kinase that acts as a regulatory link between the membrane-associated Ras GTPases and the MAPK/ERK cascade, and this critical regulatory link functions as a switch determining cell fate decisions including proliferation, differentiation, apoptosis, survival and oncogenic transformation. RAF1 activation initiates a mitogen-activated protein kinase (MAPK) cascade that comprises a sequential phosphorylation of the dual-specific MAPK kinases (MAP2K1/MEK1 and MAP2K2/MEK2) and the extracellular signal-regulated kinases (MAPK3/ERK1 and MAPK1/ERK2). The phosphorylated form of RAF1 (on residues Ser-338 and Ser-339, by PAK1) phosphorylates BAD/Bcl2-antagonist of cell death at 'Ser-75'. Phosphorylates adenylyl cyclases: ADCY2, ADCY5 and ADCY6, resulting in their activation. Phosphorylates PPP1R12A resulting in inhibition of the phosphatase activity. Phosphorylates TNNT2/cardiac muscle troponin T. Can promote NF-kB activation and inhibit signal transducers involved in motility (ROCK2), apoptosis (MAP3K5/ASK1 and STK3/MST2), proliferation and angiogenesis (RB1). Can protect cells from apoptosis also by translocating to the mitochondria where it binds BCL2 and displaces BAD/Bcl2-antagonist of cell death. Regulates Rho signaling and migration, and is required for normal wound healing. Plays a role in the oncogenic transformation of epithelial cells via repression of the TJ protein, occludin (OCLN) by inducing the up-regulation of a transcriptional repressor SNAI2/SLUG, which induces down-regulation of OCLN. Restricts caspase activation in response to selected stimuli, notably Fas stimulation, pathogen-mediated macrophage apoptosis, and erythroid differentiation. The sequence is that of RAF proto-oncogene serine/threonine-protein kinase from Homo sapiens (Human).